The primary structure comprises 285 residues: Proteasome subunit beta (285 aa).

A propeptide spans 1 to 50 (MTAEHPARLPQAFMTPGSSSFVDFLAAHDPSLLPSSRALPAGSAPPAPHG) (removed in mature form; by autocatalysis). Catalysis depends on threonine 51, which acts as the Nucleophile. Residues 266–285 (RTRQARSSRSRHGSLGGDLR) are disordered.

The protein belongs to the peptidase T1B family. In terms of assembly, the 20S proteasome core is composed of 14 alpha and 14 beta subunits that assemble into four stacked heptameric rings, resulting in a barrel-shaped structure. The two inner rings, each composed of seven catalytic beta subunits, are sandwiched by two outer rings, each composed of seven alpha subunits. The catalytic chamber with the active sites is on the inside of the barrel. Has a gated structure, the ends of the cylinder being occluded by the N-termini of the alpha-subunits. Is capped by the proteasome-associated ATPase, ARC.

It localises to the cytoplasm. It carries out the reaction Cleavage of peptide bonds with very broad specificity.. It functions in the pathway protein degradation; proteasomal Pup-dependent pathway. With respect to regulation, the formation of the proteasomal ATPase ARC-20S proteasome complex, likely via the docking of the C-termini of ARC into the intersubunit pockets in the alpha-rings, may trigger opening of the gate for substrate entry. Interconversion between the open-gate and close-gate conformations leads to a dynamic regulation of the 20S proteasome proteolysis activity. Component of the proteasome core, a large protease complex with broad specificity involved in protein degradation. The sequence is that of Proteasome subunit beta from Sanguibacter keddieii (strain ATCC 51767 / DSM 10542 / NCFB 3025 / ST-74).